Here is a 388-residue protein sequence, read N- to C-terminus: MAGCCAALAAFLFEYDTPRIVLIRSRKVGLMNRAVQLLILAYVIGWVFVWEKGYQETDSVVSSVTTKVKGVAVTNTSKLGFRIWDVADYVIPAQEENSLFVMTNVILTMNQTQGLCPEIPDATTVCKSDASCTAGSAGTHSNGVSTGRCVAFNGSVKTCEVAAWCPVEDDTHVPQPAFLKAAENFTLLVKNNIWYPKFNFSKRNILPNITTTYLKSCIYDAKTDPFCPIFRLGKIVENAGHSFQDMAVEGGIMGIQVNWDCNLDRAASLCLPRYSFRRLDTRDVEHNVSPGYNFRFAKYYRDLAGNEQRTLIKAYGIRFDIIVFGKAGKFDIIPTMINIGSGLALLGMATVLCDIIVLYCMKKRLYYREKKYKYVEDYEQGLASELDQ.

Residues 1–33 (MAGCCAALAAFLFEYDTPRIVLIRSRKVGLMNR) lie on the Cytoplasmic side of the membrane. Residues 34–54 (AVQLLILAYVIGWVFVWEKGY) traverse the membrane as a helical segment. Residues 55–338 (QETDSVVSSV…KFDIIPTMIN (284 aa)) lie on the Extracellular side of the membrane. The ATP site is built by K67 and K69. 2 residues coordinate CTP: K67 and K69. 2 N-linked (GlcNAc...) asparagine glycosylation sites follow: N75 and N110. 3 disulfide bridges follow: C116/C165, C126/C149, and C132/C159. 2 N-linked (GlcNAc...) asparagine glycosylation sites follow: N153 and N184. Positions 186 and 188 each coordinate ATP. T186 contributes to the CTP binding site. N199 and N208 each carry an N-linked (GlcNAc...) asparagine glycan. 2 cysteine pairs are disulfide-bonded: C217–C227 and C261–C270. Residues N293, R295, and K313 each coordinate ATP. N293, R295, and K313 together coordinate CTP. A helical membrane pass occupies residues 339 to 359 (IGSGLALLGMATVLCDIIVLY). Residues 360 to 388 (CMKKRLYYREKKYKYVEDYEQGLASELDQ) lie on the Cytoplasmic side of the membrane.

This sequence belongs to the P2X receptor family. As to quaternary structure, functional P2RXs are organized as homomeric and heteromeric trimers. Forms heterotrimer with P2RX1. Interacts with P2RX7 (via C-terminus); this interaction is functional only in the presence of ATP. Forms heterotrimer with P2RX4; functional differences between homomeric P2RX4 and P2RX4/6 heterotrimer are minor. Interacts with AP1M2.

The protein localises to the cell membrane. It is found in the lysosome membrane. The enzyme catalyses K(+)(in) = K(+)(out). The catalysed reaction is Na(+)(in) = Na(+)(out). It catalyses the reaction Ca(2+)(in) = Ca(2+)(out). With respect to regulation, activated by ATP. pH-dependent and inhibited by acidic pH. In terms of biological role, ATP-gated nonselective transmembrane cation channel permeable to potassium, sodium and calcium. CTP, but not GTP or UTP, functions as a weak affinity agonist for P2RX4. Activated by extracellularly released ATP, it plays multiple role in immunity and central nervous system physiology. Plays a key role in initial steps of T-cell activation and Ca(2+) microdomain formation. Also participates in basal T-cell activity without TCR/CD3 stimulation. Promotes the differentiation and activation of Th17 cells via expression of retinoic acid-related orphan receptor C/RORC. Upon activation, drives microglia motility via the PI3K/Akt pathway. Could also function as an ATP-gated cation channel of lysosomal membranes. This Homo sapiens (Human) protein is P2X purinoceptor 4 (P2RX4).